Reading from the N-terminus, the 418-residue chain is Actin-related protein 3B (418 aa).

The protein belongs to the actin family. ARP3 subfamily. Interacts with the Arp2/3 complex composed of ARP2, ARP3, ARPC1B, ARPC1B/p41-ARC, ARPC2/p34-ARC, ARPC3/p21-ARC, ARPC4/p20-ARC and ARPC5/p16-ARC.

The protein resides in the cytoplasm. It localises to the cytoskeleton. The protein localises to the cell projection. In terms of biological role, plays a role in the organization of the actin cytoskeleton. May function as ATP-binding component of the Arp2/3 complex which is involved in regulation of actin polymerization and together with an activating nucleation-promoting factor (NPF) mediates the formation of branched actin networks. May decrease the metastatic potential of tumors. The chain is Actin-related protein 3B (Actr3b) from Mus musculus (Mouse).